The primary structure comprises 239 residues: Flagellar L-ring protein (239 aa).

The signal sequence occupies residues 1–16 (MKPVILATASALLLAA). The N-palmitoyl cysteine moiety is linked to residue C17. Residue C17 is the site of S-diacylglycerol cysteine attachment. Residues 120 to 138 (SGSTSGSASGNLGLTGDTS) are compositionally biased toward polar residues. Residues 120-145 (SGSTSGSASGNLGLTGDTSTDGKGKI) are disordered.

It belongs to the FlgH family. The basal body constitutes a major portion of the flagellar organelle and consists of four rings (L,P,S, and M) mounted on a central rod.

It is found in the cell outer membrane. The protein resides in the bacterial flagellum basal body. Its function is as follows. Assembles around the rod to form the L-ring and probably protects the motor/basal body from shearing forces during rotation. The protein is Flagellar L-ring protein of Azorhizobium caulinodans (strain ATCC 43989 / DSM 5975 / JCM 20966 / LMG 6465 / NBRC 14845 / NCIMB 13405 / ORS 571).